The following is a 535-amino-acid chain: CTP synthase (535 aa).

Residues 1–267 (MTKYIFVTGG…DQIVCDHLKL (267 aa)) form an amidoligase domain region. S13 serves as a coordination point for CTP. S13 lines the UTP pocket. Residue 14-19 (SLGKGI) coordinates ATP. Y54 is a binding site for L-glutamine. D71 serves as a coordination point for ATP. Mg(2+)-binding residues include D71 and E141. Residues 148–150 (DIE), 188–193 (KTKPTQ), and K224 each bind CTP. UTP contacts are provided by residues 188 to 193 (KTKPTQ) and K224. The region spanning 292-534 (RIALVGKYVE…VQASITNKES (243 aa)) is the Glutamine amidotransferase type-1 domain. An L-glutamine-binding site is contributed by G354. C381 functions as the Nucleophile; for glutamine hydrolysis in the catalytic mechanism. Residues 382-385 (LGMQ), E405, and R462 contribute to the L-glutamine site. Residues H507 and E509 contribute to the active site.

The protein belongs to the CTP synthase family. In terms of assembly, homotetramer.

It catalyses the reaction UTP + L-glutamine + ATP + H2O = CTP + L-glutamate + ADP + phosphate + 2 H(+). It carries out the reaction L-glutamine + H2O = L-glutamate + NH4(+). The catalysed reaction is UTP + NH4(+) + ATP = CTP + ADP + phosphate + 2 H(+). The protein operates within pyrimidine metabolism; CTP biosynthesis via de novo pathway; CTP from UDP: step 2/2. With respect to regulation, allosterically activated by GTP, when glutamine is the substrate; GTP has no effect on the reaction when ammonia is the substrate. The allosteric effector GTP functions by stabilizing the protein conformation that binds the tetrahedral intermediate(s) formed during glutamine hydrolysis. Inhibited by the product CTP, via allosteric rather than competitive inhibition. Functionally, catalyzes the ATP-dependent amination of UTP to CTP with either L-glutamine or ammonia as the source of nitrogen. Regulates intracellular CTP levels through interactions with the four ribonucleotide triphosphates. The polypeptide is CTP synthase (Bacillus cytotoxicus (strain DSM 22905 / CIP 110041 / 391-98 / NVH 391-98)).